The following is a 1048-amino-acid chain: 3-hydroxy-3-methylglutaryl-coenzyme A reductase (1048 aa).

The Cytoplasmic portion of the chain corresponds to 1–32; the sequence is MDPVVRKPDPGGVQHRVTKALRAIVGHACRHP. A helical transmembrane segment spans residues 33–53; that stretch reads IHTLLVTALTAATTHLHVLEG. The Lumenal segment spans residues 54–220; the sequence is TYQATHRGLA…FLHRVHHAET (167 aa). The chain crosses the membrane as a helical span at residues 221–241; sequence VDLVIIGLSYLAMNMTVVSLF. The region spanning 222–403 is the SSD domain; the sequence is DLVIIGLSYL…FTFYATILCV (182 aa). The Cytoplasmic segment spans residues 242-250; the sequence is RVMRHLGSR. The helical transmembrane segment at 251–271 threads the bilayer; sequence FWLAASVLLSGAFAFVLGLGI. Over 272-276 the chain is Lumenal; it reads TTTCD. A helical membrane pass occupies residues 277–297; it reads VPVDMLLLFEGIPYLVLTVGF. The Cytoplasmic portion of the chain corresponds to 298 to 348; sequence EKPIQLTRAVLCVSEELWGGGQRQVPNGASSDDSRQNQLIPNIIQLAVDRE. A helical transmembrane segment spans residues 349-369; that stretch reads GWYIVRSYLLEIGALALGAVL. The Lumenal segment spans residues 370–377; the sequence is RPKDSLGH. The helical transmembrane segment at 378-398 threads the bilayer; sequence FCFLAAWTLLIDAVLLFTFYA. The Cytoplasmic segment spans residues 399-439; sequence TILCVKLEITRIRSPGGLGQVNAKHPSGIFGHKVKSTNITW. The helical transmembrane segment at 440-460 threads the bilayer; sequence WKLLTVGGFVLCHFLQLSPFF. Over 461-542 the chain is Lumenal; the sequence is YRVMGEYMAN…LDGLESPLGR (82 aa). Residues N470 and N520 are each glycosylated (N-linked (GlcNAc...) asparagine). A helical membrane pass occupies residues 543–563; it reads LCLMGALVVSLVLNNHLIHAA. Over 564-1048 the chain is Cytoplasmic; it reads RWHAWPQARE…NRSAGATVKK (485 aa). The active-site Charge relay system is the E729. 735–741 contributes to the CoA binding site; the sequence is SASRGCK. NADP(+) is bound by residues 796-798 and 823-831; these read SRF and DAMGMNMIS. Catalysis depends on K863, which acts as the Charge relay system. 892–894 provides a ligand contact to CoA; the sequence is VLK. D939 (charge relay system) is an active-site residue. 1034 to 1035 serves as a coordination point for CoA; the sequence is AH. The Proton donor role is filled by H1035. Residue 1039–1040 coordinates NADP(+); it reads NR.

It belongs to the HMG-CoA reductase family.

The protein localises to the endoplasmic reticulum membrane. It catalyses the reaction (R)-mevalonate + 2 NADP(+) + CoA = (3S)-3-hydroxy-3-methylglutaryl-CoA + 2 NADPH + 2 H(+). It functions in the pathway metabolic intermediate biosynthesis; (R)-mevalonate biosynthesis; (R)-mevalonate from acetyl-CoA: step 3/3. HMG-CoA reductase; part of the first module of ergosterol biosynthesis pathway that includes the early steps of the pathway, conserved across all eukaryotes, and which results in the formation of mevalonate from acetyl-coenzyme A (acetyl-CoA). In this module, the cytosolic acetyl-CoA acetyltransferase catalyzes the formation of acetoacetyl-CoA. The hydroxymethylglutaryl-CoA synthase then condenses acetyl-CoA with acetoacetyl-CoA to form HMG-CoA. The rate-limiting step of the early module is the reduction to mevalonate by the 3-hydroxy-3-methylglutaryl-coenzyme A (HMG-CoA) reductase. The polypeptide is 3-hydroxy-3-methylglutaryl-coenzyme A reductase (Aspergillus terreus).